The sequence spans 257 residues: Imidazole glycerol phosphate synthase subunit HisF (257 aa).

Residues D11 and D130 contribute to the active site.

Belongs to the HisA/HisF family. Heterodimer of HisH and HisF.

The protein localises to the cytoplasm. It carries out the reaction 5-[(5-phospho-1-deoxy-D-ribulos-1-ylimino)methylamino]-1-(5-phospho-beta-D-ribosyl)imidazole-4-carboxamide + L-glutamine = D-erythro-1-(imidazol-4-yl)glycerol 3-phosphate + 5-amino-1-(5-phospho-beta-D-ribosyl)imidazole-4-carboxamide + L-glutamate + H(+). It functions in the pathway amino-acid biosynthesis; L-histidine biosynthesis; L-histidine from 5-phospho-alpha-D-ribose 1-diphosphate: step 5/9. IGPS catalyzes the conversion of PRFAR and glutamine to IGP, AICAR and glutamate. The HisF subunit catalyzes the cyclization activity that produces IGP and AICAR from PRFAR using the ammonia provided by the HisH subunit. This is Imidazole glycerol phosphate synthase subunit HisF from Shewanella halifaxensis (strain HAW-EB4).